The primary structure comprises 308 residues: Putative mitochondrial transporter UCP3 (308 aa).

Over 1-10 (MVGLQPSEVP) the chain is Mitochondrial intermembrane. A helical membrane pass occupies residues 11 to 32 (PTTVVKFLGAGTAACFADLLTF). 3 Solcar repeats span residues 11-102 (PTTV…VKQF), 111-202 (SSVA…IKEK), and 211-296 (DNFP…LKRA). Topologically, residues 33–73 (PLDTAKVRLQIQGENPGAQSVQYRGVLGTILTMVRTEGPRS) are mitochondrial matrix. A helical membrane pass occupies residues 74–96 (PYSGLVAGLHRQMSFASIRIGLY). The Mitochondrial intermembrane segment spans residues 97 to 116 (DSVKQFYTPKGADHSSVAIR). Residues 117–133 (ILAGCTTGAMAVTCAQP) form a helical membrane-spanning segment. Residues 134-179 (TDVVKVRFQAMIRLGTGGERKYRGTMDAYRTIAREEGVRGLWKGTW) lie on the Mitochondrial matrix side of the membrane. Residues 180-196 (PNITRNAIVNCAEMVTY) form a helical membrane-spanning segment. Residues 197-213 (DIIKEKLLESHLFTDNF) are Mitochondrial intermembrane-facing. A helical membrane pass occupies residues 214 to 233 (PCHFVSAFGAGFCATVVASP). The Mitochondrial matrix portion of the chain corresponds to 234–267 (VDVVKTRYMNAPLGRYRSPLHCMLKMVAQEGPTA). Residues 268–290 (FYKGFVPSFLRLGAWNVMMFVTY) traverse the membrane as a helical segment. The interval 275–297 (SFLRLGAWNVMMFVTYEQLKRAL) is purine nucleotide binding. Topologically, residues 291–308 (EQLKRALMKVQVLRESPF) are mitochondrial intermembrane.

Belongs to the mitochondrial carrier (TC 2.A.29) family. In terms of assembly, interacts with HAX1; the interaction is direct and calcium-dependent.

The protein resides in the mitochondrion inner membrane. With respect to regulation, inhibited by purine nucleotides and inorganic phosphate (in vitro). Its function is as follows. Putative transmembrane transporter that plays a role in mitochondrial metabolism via an as yet unclear mechanism. Originally, this mitochondrial protein was thought to act as a proton transmembrane transporter from the mitochondrial intermembrane space into the matrix, causing proton leaks through the inner mitochondrial membrane, thereby uncoupling mitochondrial membrane potential generation from ATP synthesis. However, this function is controversial and uncoupling may not be the function, or at least not the main function, but rather a consequence of more conventional metabolite transporter activity. The protein is Putative mitochondrial transporter UCP3 of Mus musculus (Mouse).